We begin with the raw amino-acid sequence, 151 residues long: Nucleoside diphosphate kinase (151 aa).

6 residues coordinate ATP: K9, F57, R85, T91, R102, and N112. H115 acts as the Pros-phosphohistidine intermediate in catalysis.

The protein belongs to the NDK family. Requires Mg(2+) as cofactor.

It is found in the cytoplasm. The catalysed reaction is a 2'-deoxyribonucleoside 5'-diphosphate + ATP = a 2'-deoxyribonucleoside 5'-triphosphate + ADP. It carries out the reaction a ribonucleoside 5'-diphosphate + ATP = a ribonucleoside 5'-triphosphate + ADP. Its function is as follows. Major role in the synthesis of nucleoside triphosphates other than ATP. The ATP gamma phosphate is transferred to the NDP beta phosphate via a ping-pong mechanism, using a phosphorylated active-site intermediate. The polypeptide is Nucleoside diphosphate kinase (Archaeoglobus fulgidus (strain ATCC 49558 / DSM 4304 / JCM 9628 / NBRC 100126 / VC-16)).